A 50-amino-acid polypeptide reads, in one-letter code: MAREGLTLRCTDCKMENYITKKNKKTKPEKIEVKKHCHKCNKHTLHREKK.

This sequence belongs to the bacterial ribosomal protein bL33 family.

The protein is Large ribosomal subunit protein bL33B of Mesomycoplasma hyopneumoniae (strain 7448) (Mycoplasma hyopneumoniae).